Consider the following 308-residue polypeptide: Bifunctional protein FolD (308 aa).

Residues 171 to 173 (GRS), Ser198, and Ile239 each bind NADP(+).

This sequence belongs to the tetrahydrofolate dehydrogenase/cyclohydrolase family. Homodimer.

The enzyme catalyses (6R)-5,10-methylene-5,6,7,8-tetrahydrofolate + NADP(+) = (6R)-5,10-methenyltetrahydrofolate + NADPH. The catalysed reaction is (6R)-5,10-methenyltetrahydrofolate + H2O = (6R)-10-formyltetrahydrofolate + H(+). It participates in one-carbon metabolism; tetrahydrofolate interconversion. Catalyzes the oxidation of 5,10-methylenetetrahydrofolate to 5,10-methenyltetrahydrofolate and then the hydrolysis of 5,10-methenyltetrahydrofolate to 10-formyltetrahydrofolate. The chain is Bifunctional protein FolD from Borreliella burgdorferi (strain ZS7) (Borrelia burgdorferi).